The following is a 441-amino-acid chain: MTTTRFAPSPTGHIHVGNLRTALMNYLIARKAGGTFILRLDDTDRERSKQEYADGIQRDLEWLGLTWDRIERQSDRLDRYAEAAEGLRAAGRLYEVFETPTELDLKRKKQLNMGKPPVYDRAGLKLSAEDKDRLRAEGRAGYWRFLLDQERIEWADGILGDISIDAASVSDPVLIRADGQVLYTFASSVDDAEMGVTHIVRGADHVTNTATQIQIIRALGSEPPAFAHHSLLTGAQGEELSKRLGTLSIRDLRESGVAPEALLSLMARLGSSQPVELKMSLDELAEGFDLGQFGASPTKFDAEDLWPLTREANQSRPLAEVRDRIAALGVPDELVERFWRVASQNITKLDDLAGWWQIFSTGAEPQIDPEDADFIAEAMKLLPPPPYTDATWGEFTNAVKQATGRKGKGLFMPLRKALTGQAHGPDMSEVMPLLQVVRARG.

The 'HIGH' region motif lies at 8-18; sequence PSPTGHIHVGN. The short motif at 239-243 is the 'KMSKS' region element; the sequence is ELSKR. Lysine 242 is a binding site for ATP.

This sequence belongs to the class-I aminoacyl-tRNA synthetase family. Glutamate--tRNA ligase type 1 subfamily. As to quaternary structure, monomer.

The protein localises to the cytoplasm. The enzyme catalyses tRNA(Glu) + L-glutamate + ATP = L-glutamyl-tRNA(Glu) + AMP + diphosphate. Catalyzes the attachment of glutamate to tRNA(Glu) in a two-step reaction: glutamate is first activated by ATP to form Glu-AMP and then transferred to the acceptor end of tRNA(Glu). The chain is Glutamate--tRNA ligase 1 from Paracoccus denitrificans (strain Pd 1222).